The chain runs to 372 residues: Flagellar P-ring protein (372 aa).

Positions 1–26 (MNLSSLPFRLLAAAVALCAIAAPASA) are cleaved as a signal peptide.

This sequence belongs to the FlgI family. As to quaternary structure, the basal body constitutes a major portion of the flagellar organelle and consists of four rings (L,P,S, and M) mounted on a central rod.

It localises to the periplasm. It is found in the bacterial flagellum basal body. Assembles around the rod to form the L-ring and probably protects the motor/basal body from shearing forces during rotation. This chain is Flagellar P-ring protein, found in Xanthomonas campestris pv. campestris (strain B100).